A 99-amino-acid chain; its full sequence is MKTQMKKPWIEYELMWLIRPDLNQEEIKKEIEAVMKVLEESRRVQLNGKTTRKLAYKIGKYEEGHYVQMEFDGYGRIVKKLEKYLQVNEKGLRYMILRK.

This sequence belongs to the bacterial ribosomal protein bS6 family.

Its subcellular location is the plastid. It localises to the chloroplast. Its function is as follows. Binds together with bS18 to 16S ribosomal RNA. This chain is Small ribosomal subunit protein bS6c, found in Cyanidioschyzon merolae (strain NIES-3377 / 10D) (Unicellular red alga).